Reading from the N-terminus, the 248-residue chain is Glucosamine-6-phosphate isomerase (248 aa).

The active-site Proton acceptor; for enolization step is Asp68. The active-site For ring-opening step is Glu137. Residue His139 is the Proton acceptor; for ring-opening step of the active site. The active-site For ring-opening step is Glu144.

Belongs to the glucosamine/galactosamine-6-phosphate isomerase family. As to quaternary structure, monomer.

It catalyses the reaction alpha-D-glucosamine 6-phosphate + H2O = beta-D-fructose 6-phosphate + NH4(+). This is Glucosamine-6-phosphate isomerase (NAG1) from Candida albicans (strain SC5314 / ATCC MYA-2876) (Yeast).